Reading from the N-terminus, the 294-residue chain is Cytidine deaminase (294 aa).

2 CMP/dCMP-type deaminase domains span residues 48–168 (DEDA…FGPK) and 186–294 (LTGN…VLLG). 89–91 (NME) lines the substrate pocket. Residue H102 participates in Zn(2+) binding. Residue E104 is the Proton donor of the active site. Positions 129 and 132 each coordinate Zn(2+).

It belongs to the cytidine and deoxycytidylate deaminase family. As to quaternary structure, homodimer. Zn(2+) is required as a cofactor.

It carries out the reaction cytidine + H2O + H(+) = uridine + NH4(+). The enzyme catalyses 2'-deoxycytidine + H2O + H(+) = 2'-deoxyuridine + NH4(+). In terms of biological role, this enzyme scavenges exogenous and endogenous cytidine and 2'-deoxycytidine for UMP synthesis. The chain is Cytidine deaminase from Salmonella typhi.